The chain runs to 424 residues: Gamma-glutamyl phosphate reductase (424 aa).

Belongs to the gamma-glutamyl phosphate reductase family.

It localises to the cytoplasm. It catalyses the reaction L-glutamate 5-semialdehyde + phosphate + NADP(+) = L-glutamyl 5-phosphate + NADPH + H(+). Its pathway is amino-acid biosynthesis; L-proline biosynthesis; L-glutamate 5-semialdehyde from L-glutamate: step 2/2. Functionally, catalyzes the NADPH-dependent reduction of L-glutamate 5-phosphate into L-glutamate 5-semialdehyde and phosphate. The product spontaneously undergoes cyclization to form 1-pyrroline-5-carboxylate. The polypeptide is Gamma-glutamyl phosphate reductase (Dehalococcoides mccartyi (strain ATCC BAA-2100 / JCM 16839 / KCTC 5957 / BAV1)).